Consider the following 78-residue polypeptide: DNA-directed RNA polymerase subunit omega (78 aa).

It belongs to the RNA polymerase subunit omega family. As to quaternary structure, in cyanobacteria the RNAP catalytic core is composed of 2 alpha, 1 beta, 1 beta', 1 gamma and 1 omega subunit. When a sigma factor is associated with the core the holoenzyme is formed, which can initiate transcription.

The enzyme catalyses RNA(n) + a ribonucleoside 5'-triphosphate = RNA(n+1) + diphosphate. In terms of biological role, promotes RNA polymerase assembly. Latches the N- and C-terminal regions of the beta' subunit thereby facilitating its interaction with the beta and alpha subunits. This Trichormus variabilis (strain ATCC 29413 / PCC 7937) (Anabaena variabilis) protein is DNA-directed RNA polymerase subunit omega.